The chain runs to 197 residues: Peptide deformylase (197 aa).

Cysteine 106 and histidine 148 together coordinate Fe cation. Glutamate 149 is a catalytic residue. Histidine 152 is a Fe cation binding site.

Belongs to the polypeptide deformylase family. Fe(2+) serves as cofactor.

It catalyses the reaction N-terminal N-formyl-L-methionyl-[peptide] + H2O = N-terminal L-methionyl-[peptide] + formate. Functionally, removes the formyl group from the N-terminal Met of newly synthesized proteins. Requires at least a dipeptide for an efficient rate of reaction. N-terminal L-methionine is a prerequisite for activity but the enzyme has broad specificity at other positions. The chain is Peptide deformylase from Mycolicibacterium paratuberculosis (strain ATCC BAA-968 / K-10) (Mycobacterium paratuberculosis).